The primary structure comprises 166 residues: Transcription antitermination protein NusB (166 aa).

The segment covering 1–15 has biased composition (basic and acidic residues); the sequence is MISDDSDRFNPRDPK. A disordered region spans residues 1–30; that stretch reads MISDDSDRFNPRDPKPANAGKPSKSAKRRE.

This sequence belongs to the NusB family.

Functionally, involved in transcription antitermination. Required for transcription of ribosomal RNA (rRNA) genes. Binds specifically to the boxA antiterminator sequence of the ribosomal RNA (rrn) operons. This is Transcription antitermination protein NusB from Pseudomonas fluorescens (strain ATCC BAA-477 / NRRL B-23932 / Pf-5).